The following is a 535-amino-acid chain: CTP synthase (535 aa).

An amidoligase domain region spans residues 1 to 267 (MTKYIFVTGG…DQIVCDHLKL (267 aa)). Position 13 (S13) interacts with CTP. Residue S13 participates in UTP binding. 14–19 (SLGKGI) lines the ATP pocket. Y54 contacts L-glutamine. Residue D71 coordinates ATP. Residues D71 and E141 each coordinate Mg(2+). CTP is bound by residues 148-150 (DIE), 188-193 (KTKPTQ), and K224. UTP-binding positions include 188 to 193 (KTKPTQ) and K224. Residue 240–242 (RDA) coordinates ATP. The Glutamine amidotransferase type-1 domain maps to 292 to 534 (KIALVGKYVE…VRASITNKES (243 aa)). G354 is an L-glutamine binding site. C381 acts as the Nucleophile; for glutamine hydrolysis in catalysis. L-glutamine is bound by residues 382–385 (LGMQ), E405, and R462. Residues H507 and E509 contribute to the active site.

Belongs to the CTP synthase family. As to quaternary structure, homotetramer.

It carries out the reaction UTP + L-glutamine + ATP + H2O = CTP + L-glutamate + ADP + phosphate + 2 H(+). The catalysed reaction is L-glutamine + H2O = L-glutamate + NH4(+). It catalyses the reaction UTP + NH4(+) + ATP = CTP + ADP + phosphate + 2 H(+). It functions in the pathway pyrimidine metabolism; CTP biosynthesis via de novo pathway; CTP from UDP: step 2/2. With respect to regulation, allosterically activated by GTP, when glutamine is the substrate; GTP has no effect on the reaction when ammonia is the substrate. The allosteric effector GTP functions by stabilizing the protein conformation that binds the tetrahedral intermediate(s) formed during glutamine hydrolysis. Inhibited by the product CTP, via allosteric rather than competitive inhibition. In terms of biological role, catalyzes the ATP-dependent amination of UTP to CTP with either L-glutamine or ammonia as the source of nitrogen. Regulates intracellular CTP levels through interactions with the four ribonucleotide triphosphates. This is CTP synthase from Bacillus cereus (strain AH187).